We begin with the raw amino-acid sequence, 160 residues long: Thy-1 membrane glycoprotein (160 aa).

A signal peptide spans 1–19 (MNPTVSIAVILTVLQAAHC). A Pyrrolidone carboxylic acid modification is found at Gln20. Residues 20 to 120 (QMIRDLSACL…YTGNQIKNIT (101 aa)) enclose the Ig-like V-type domain. 2 cysteine pairs are disulfide-bonded: Cys28–Cys129 and Cys38–Cys103. 3 N-linked (GlcNAc...) asparagine glycosylation sites follow: Asn42, Asn78, and Asn118. The GPI-anchor amidated cysteine moiety is linked to residue Cys129. A propeptide spans 130-160 (VRLSLLIQNTSWLLLLLLSLPLLQAVDFVSL) (removed in mature form). Asn138 is a glycosylation site (N-linked (GlcNAc...) asparagine).

Post-translationally, the N-terminus is blocked. In terms of tissue distribution, forebrain, cerebellum and tectum.

It is found in the cell membrane. Functionally, may play a role in cell-cell or cell-ligand interactions during synaptogenesis and other events in the brain. This chain is Thy-1 membrane glycoprotein (THY1), found in Gallus gallus (Chicken).